A 351-amino-acid chain; its full sequence is MTDSLPLLLRAARGESVNRPPVWMMRQAGRYMKVYRELRDNHPSFRERSENPDLSYEISMQPFREFKPDGVILFSDILTPLPGMGIDFDIVESKGPLINDPIRTLEQVKTLRPLEPQVSLPFVGEVLGRLRESVKNEAAVLGFVGAPWTLAAYVVEGKSSKNYSVIKAMAFQQPDLLHKLLNHFAESIANYLKYQIESGAQVVQMFDSWAGQLSPIDYDNYAAPYQKKVVDLVKQSHPDTPMILYISGSAGVIERMAKTGVDIVSLDWTVDMAEGCARLPNNIGIQGNVDPGILFGTPKMIQERIIDTVKKAKGRKHILNLGHGILPGTPEENAKVFFETGKNINNLISNI.

Substrate is bound by residues 26 to 30 (RQAGR), F45, D76, Y153, S208, and H323.

This sequence belongs to the uroporphyrinogen decarboxylase family. In terms of assembly, homodimer.

The protein localises to the cytoplasm. It catalyses the reaction uroporphyrinogen III + 4 H(+) = coproporphyrinogen III + 4 CO2. It participates in porphyrin-containing compound metabolism; protoporphyrin-IX biosynthesis; coproporphyrinogen-III from 5-aminolevulinate: step 4/4. Catalyzes the decarboxylation of four acetate groups of uroporphyrinogen-III to yield coproporphyrinogen-III. In Prochlorococcus marinus (strain SARG / CCMP1375 / SS120), this protein is Uroporphyrinogen decarboxylase.